The chain runs to 125 residues: uncharacterized protein (125 aa).

A chloroplast-targeting transit peptide spans 1–46; that stretch reads MFFDTKVLNYPTIHKSISMASTMQRTSSSAASNERQLSQLQRRAPS.

The protein resides in the plastid. The protein localises to the chloroplast. This is an uncharacterized protein from Arabidopsis thaliana (Mouse-ear cress).